We begin with the raw amino-acid sequence, 1300 residues long: Kinesin-like protein KIN-4C (1300 aa).

One can recognise a Kinesin motor domain in the interval 6 to 360; sequence CVRVAVNIRP…LKYANRARNI (355 aa). Residue 85–92 participates in ATP binding; that stretch reads GQTGSGKT. Coiled coils occupy residues 580–615, 653–697, and 781–823; these read TSVLKQHYEKKVYDLEQEKRALQREIEGLRHNLASI, QLMR…RAWK, and EVTV…AKIS. Composition is skewed to basic and acidic residues over residues 956–971 and 1001–1013; these read ADENLKNEHSMKKQET and EWKPEHESERESE. Disordered stretches follow at residues 956–1018, 1097–1132, 1144–1187, and 1200–1300; these read ADEN…ESVI, NADGKENNSISESEALENGENSQESDEKDKGQQQQV, ALAD…RKKW, and PALP…TRRV. 4 stretches are compositionally biased toward polar residues: residues 1169 to 1180, 1205 to 1222, 1230 to 1239, and 1275 to 1288; these read IGNTTGKSNVPR, THTNTHLIPEANSVTVDS, NSDSGESNSI, and GFVQSNSGRASGSR. The span at 1289 to 1300 shows a compositional bias: basic and acidic residues; the sequence is TSDEKENHTRRV.

This sequence belongs to the TRAFAC class myosin-kinesin ATPase superfamily. Kinesin family. KIN-4 subfamily. In terms of assembly, homodimer.

Kinesin-like motor protein involved in the control of the oriented deposition of cellulose microfibrils. This is Kinesin-like protein KIN-4C from Arabidopsis thaliana (Mouse-ear cress).